The following is a 716-amino-acid chain: Epidermal growth factor receptor kinase substrate 8-like protein 2 (716 aa).

Disordered stretches follow at residues 1–25 and 182–243; these read MSQS…DGVA and PQTL…SQEE. The 157-residue stretch at 46-202 folds into the PID domain; it reads MHETSQYHVQ…RQRQSILPPP (157 aa). Positions 199–208 are enriched in pro residues; sequence LPPPQGPAPI. Residues 234–243 show a composition bias toward basic and acidic residues; sequence GFRRRESQEE. Serine 240 bears the Phosphoserine mark. Residue threonine 304 is modified to Phosphothreonine. The segment at 449–488 is disordered; that stretch reads VSPVSRQSIRNSQKHSPTSEPTPPGDALPPVSSPHTHRGY. Serine 450 carries the phosphoserine modification. Polar residues predominate over residues 452–467; that stretch reads VSRQSIRNSQKHSPTS. Threonine 470 bears the Phosphothreonine mark. In terms of domain architecture, SH3 spans 493-552; it reads AMAKYVKILYDFTARNANELSVLKDEVLEVLEDGRQWWKLRSRSGQAGYVPCNILGEARP. Serine 571 bears the Phosphoserine mark.

The protein belongs to the EPS8 family. As to quaternary structure, interacts with ABI1. Part of a complex that contains SOS1, ABI1 and EPS8L2. Associates with F-actin.

The protein localises to the cytoplasm. Its subcellular location is the cell projection. It localises to the stereocilium. Its function is as follows. Stimulates guanine exchange activity of SOS1. May play a role in membrane ruffling and remodeling of the actin cytoskeleton. In the cochlea, is required for stereocilia maintenance in adult hair cells. In Pongo abelii (Sumatran orangutan), this protein is Epidermal growth factor receptor kinase substrate 8-like protein 2 (EPS8L2).